The following is a 472-amino-acid chain: Probable sterol O-acyltransferase 2 (472 aa).

S12 is subject to Phosphoserine. 3 helical membrane-spanning segments follow: residues 61-81 (FTGF…MSFL), 111-131 (LAMS…ALGY), and 135-155 (YGLG…HCVL). Residue N161 is glycosylated (N-linked (GlcNAc...) asparagine). The chain crosses the membrane as a helical span at residues 170-190 (FILHSMVILMKLHSYNVVNGW). Residue N233 is glycosylated (N-linked (GlcNAc...) asparagine). The next 2 helical transmembrane spans lie at 262 to 282 (IHYL…LVII) and 317 to 337 (TVAF…WVIF). N342 carries N-linked (GlcNAc...) asparagine glycosylation. An FYXDWWN motif motif is present at residues 355 to 361 (FYDDWWN). H409 is an active-site residue. The chain crosses the membrane as a helical span at residues 452 to 472 (IAFWFSIIIGIALIAALYILF).

The protein belongs to the membrane-bound acyltransferase family. Sterol o-acyltransferase subfamily.

Its subcellular location is the endoplasmic reticulum membrane. In terms of biological role, sterol O-acyltransferase that catalyzes the formation of stery esters. The sequence is that of Probable sterol O-acyltransferase 2 (are2) from Schizosaccharomyces pombe (strain 972 / ATCC 24843) (Fission yeast).